The primary structure comprises 560 residues: MSNKVKSDIEIASKAEILPVTTIAEHLGLDADALELYGKYKAKLSYDTIHSLKDKEPGKLVLVTAINPTPAGEGKSTVTVGLGDALSKKDKKTVIALREPSLGPTMGIKGGATGGGYAQVIPMEDINLHFTGDFHAITAANNALSAFIDNHMQQGNDLDIDGRRIVWKRVVDLNDRALRKVVVGLGGPIQGVPREDGFDITVASEIMAIICLASDLKDLKKRLSEIVIGYNYKKEPITVGEMGYEGALTLLLKDALKPNLVQTLEHTPAIVHGGPFANIAHGCNSVSATSTALRLGEYVVTEAGFGADLGAEKFLDIKVPALGKAPDCVVIVATIRALKMHGGALKTELSEENVDALAKGFTNLQKHTESIQTFGIPYVVAINKFITDSDAEVAKLEALCEEHGIPFSLTEVWEKGGDGGLELADKVIAAVESGEADYKRIYDDAWSIEEKLEAIVTKVYGGIGVELSSKAQKQIVEFKKYGWDRYPICMAKTQYSLSDDPTLLGRPTDFVIHIREFIPKLGAGFVVALTGDVMTMPGLPKKPAALNMDVDENGNAQGLF.

69 to 76 (TPAGEGKS) contributes to the ATP binding site.

This sequence belongs to the formate--tetrahydrofolate ligase family.

It carries out the reaction (6S)-5,6,7,8-tetrahydrofolate + formate + ATP = (6R)-10-formyltetrahydrofolate + ADP + phosphate. It functions in the pathway one-carbon metabolism; tetrahydrofolate interconversion. This chain is Formate--tetrahydrofolate ligase, found in Listeria monocytogenes serotype 4b (strain CLIP80459).